The following is a 132-amino-acid chain: DNA-directed RNA polymerase subunit omega (132 aa).

Residues 89-109 (HSSESESIFNTSSQEEGTSFD) are disordered. Positions 96-105 (IFNTSSQEEG) are enriched in polar residues.

The protein belongs to the RNA polymerase subunit omega family. As to quaternary structure, the RNAP catalytic core consists of 2 alpha, 1 beta, 1 beta' and 1 omega subunit. When a sigma factor is associated with the core the holoenzyme is formed, which can initiate transcription.

It catalyses the reaction RNA(n) + a ribonucleoside 5'-triphosphate = RNA(n+1) + diphosphate. Promotes RNA polymerase assembly. Latches the N- and C-terminal regions of the beta' subunit thereby facilitating its interaction with the beta and alpha subunits. This chain is DNA-directed RNA polymerase subunit omega, found in Bartonella tribocorum (strain CIP 105476 / IBS 506).